Reading from the N-terminus, the 560-residue chain is Excitatory amino acid transporter 5 (560 aa).

Residues 1 to 16 (MVPHAILARGRDVCRR) lie on the Cytoplasmic side of the membrane. The next 3 helical transmembrane spans lie at 17-37 (NGLL…GFFL), 60-80 (MLKM…LASL), and 94-114 (AYYL…VSII). Residues 115-216 (HPGSAAQKET…EVVYKSEPGT (102 aa)) are Extracellular-facing. Asn191 carries N-linked (GlcNAc...) asparagine glycosylation. The next 7 helical transmembrane spans lie at 217–237 (SDGM…IMLG), 260–280 (IVAV…AGKI), 300–320 (VVCG…FFIT), 330–350 (GILQ…TLPI), 372–392 (VGAT…AIFI), 414–434 (AASI…VIVL), and 457–477 (FRTM…AHIC).

Belongs to the dicarboxylate/amino acid:cation symporter (DAACS) (TC 2.A.23) family. SLC1A7 subfamily. In terms of assembly, interacts with the PDZ domains of DLG4. As to expression, expressed primarily in retina. Detectable in liver, heart, muscle and brain.

The protein resides in the photoreceptor inner segment membrane. The protein localises to the synaptic cell membrane. The catalysed reaction is K(+)(in) + L-glutamate(out) + 3 Na(+)(out) + H(+)(out) = K(+)(out) + L-glutamate(in) + 3 Na(+)(in) + H(+)(in). It carries out the reaction K(+)(in) + L-aspartate(out) + 3 Na(+)(out) + H(+)(out) = K(+)(out) + L-aspartate(in) + 3 Na(+)(in) + H(+)(in). It catalyses the reaction D-aspartate(out) + K(+)(in) + 3 Na(+)(out) + H(+)(out) = D-aspartate(in) + K(+)(out) + 3 Na(+)(in) + H(+)(in). Functionally, sodium-dependent, high-affinity amino acid transporter that mediates the uptake of L-glutamate and also L-aspartate and D-aspartate. Functions as a symporter that transports one amino acid molecule together with two or three Na(+) ions and one proton, in parallel with the counter-transport of one K(+) ion. Acts primarily as an inhibitory glutamate-gated chloride channel being a major inhibitory presynaptic receptor at mammalian rod bipolar cell axon terminals. Glutamate binding gates a large Cl(-) conductance that mediates inhibition, affecting visual processing in the retina. This is Excitatory amino acid transporter 5 from Homo sapiens (Human).